The chain runs to 294 residues: Bifunctional protein FolD 1 (294 aa).

Residues 165-167 (GRS), Ser190, and Thr231 contribute to the NADP(+) site.

Belongs to the tetrahydrofolate dehydrogenase/cyclohydrolase family. In terms of assembly, homodimer.

The catalysed reaction is (6R)-5,10-methylene-5,6,7,8-tetrahydrofolate + NADP(+) = (6R)-5,10-methenyltetrahydrofolate + NADPH. It carries out the reaction (6R)-5,10-methenyltetrahydrofolate + H2O = (6R)-10-formyltetrahydrofolate + H(+). Its pathway is one-carbon metabolism; tetrahydrofolate interconversion. In terms of biological role, catalyzes the oxidation of 5,10-methylenetetrahydrofolate to 5,10-methenyltetrahydrofolate and then the hydrolysis of 5,10-methenyltetrahydrofolate to 10-formyltetrahydrofolate. The sequence is that of Bifunctional protein FolD 1 from Paenarthrobacter aurescens (strain TC1).